Here is a 487-residue protein sequence, read N- to C-terminus: FAD-dependent oxidoreductase domain-containing protein 1 (487 aa).

A helical membrane pass occupies residues 62–82; it reads EQADVVIIGGGILGLSVAFWL.

As to quaternary structure, associates with components of the mitochondrial respiratory chain complex I. FAD is required as a cofactor.

It is found in the mitochondrion inner membrane. Required for the assembly of the mitochondrial membrane respiratory chain NADH dehydrogenase (Complex I). Involved in mid-late stages of complex I assembly. This chain is FAD-dependent oxidoreductase domain-containing protein 1 (Foxred1), found in Mus musculus (Mouse).